The sequence spans 394 residues: Transcriptional regulator Myc-1 (394 aa).

Threonine 58 carries an O-linked (GlcNAc) threonine glycan. Positions 76-84 (EMVSEFLGD) match the 9aaTAD motif. Disordered stretches follow at residues 177–247 (SGKS…SRYP) and 283–318 (EASSNSNSRHVKQRKCTSPRTSDSEDNDKRRTHNVL). Residues 205–226 (DSEEEEEEEEEEEEEEEEEEID) show a composition bias toward acidic residues. Residues 229–238 (TVEKRQKKNE) show a composition bias toward basic and acidic residues. Positions 310–362 (DKRRTHNVLERQRRNELKLSFFALRDEIPDVANNEKAAKVVILKKATECIHSM) constitute a bHLH domain. A leucine-zipper region spans residues 369–390 (LLSIKEQLRRKSEQLKHRLQLL).

In terms of assembly, efficient DNA binding requires dimerization with another bHLH protein. Binds DNA as a heterodimer with MAX.

Its subcellular location is the nucleus. In terms of biological role, transcription factor that binds DNA in a non-specific manner, yet also specifically recognizes the core sequence 5'-CAC[GA]TG-3'. Activates the transcription of growth-related genes. In Cyprinus carpio (Common carp), this protein is Transcriptional regulator Myc-1 (myca).